The primary structure comprises 280 residues: Small ribosomal subunit protein uS3 (280 aa).

The KH type-2 domain maps to 38 to 106 (IRKLLATGLE…QVQLNILEVK (69 aa)). Positions 216 to 280 (AAAPAADRPR…SAGQPETTES (65 aa)) are disordered. Low complexity predominate over residues 237 to 270 (SGASGTTATSTDAGRAASEGTVEAPATEAAATAP).

The protein belongs to the universal ribosomal protein uS3 family. Part of the 30S ribosomal subunit. Forms a tight complex with proteins S10 and S14.

Functionally, binds the lower part of the 30S subunit head. Binds mRNA in the 70S ribosome, positioning it for translation. The chain is Small ribosomal subunit protein uS3 from Mycolicibacterium vanbaalenii (strain DSM 7251 / JCM 13017 / BCRC 16820 / KCTC 9966 / NRRL B-24157 / PYR-1) (Mycobacterium vanbaalenii).